Consider the following 92-residue polypeptide: Acylphosphatase (92 aa).

Positions 3–92 (TKHVLVSGIV…GPRSTHFEVT (90 aa)) constitute an Acylphosphatase-like domain. Catalysis depends on residues Arg18 and Asn36.

Belongs to the acylphosphatase family.

The enzyme catalyses an acyl phosphate + H2O = a carboxylate + phosphate + H(+). The sequence is that of Acylphosphatase (acyP) from Alcanivorax borkumensis (strain ATCC 700651 / DSM 11573 / NCIMB 13689 / SK2).